We begin with the raw amino-acid sequence, 745 residues long: Heterogeneous nuclear ribonucleoprotein U-like protein 2 (745 aa).

The region spanning 3–37 (VKRLKVTELRSELQRRGLDSRGLKMDLAQRLQEAL) is the SAP domain. Disordered stretches follow at residues 44–239 (DEAG…DEEE) and 625–664 (EEARKLLPPSEKRTNRRNNRNKRNRQNRSRGQGYVGGQRR). Acidic residues predominate over residues 73–97 (GDEEEEDDDEEEDEEALLEDEDEEP). Basic and acidic residues predominate over residues 142–161 (GEEHDNGKGEEDGPEERSGD). At Ser-159 the chain carries Phosphoserine. Thr-163 is modified (phosphothreonine). A phosphoserine mark is found at Ser-166, Ser-183, Ser-186, Ser-224, and Ser-226. A compositionally biased stretch (basic and acidic residues) spans 183-221 (SEKSKPAGSDGERRGVKRQRDEKDEHGRAYYEFREEAYH). Residues 224–417 (SKSPPPPEEE…VELNFGQKEE (194 aa)) form the B30.2/SPRY domain. Residues 230–239 (PEEEAKDEEE) are compositionally biased toward acidic residues. Residues 625–637 (EEARKLLPPSEKR) show a composition bias toward basic and acidic residues. Basic residues predominate over residues 638–652 (TNRRNNRNKRNRQNR). Omega-N-methylarginine occurs at positions 654, 682, 736, and 745.

Binds to MLF1 and retains it in the nucleus.

It localises to the nucleus. The chain is Heterogeneous nuclear ribonucleoprotein U-like protein 2 (Hnrnpul2) from Mus musculus (Mouse).